The following is a 291-amino-acid chain: Small ribosomal subunit protein uS2 (291 aa).

Residues 231–291 (NRGSGTTEAP…AAEAPAEDAK (61 aa)) form a disordered region. The span at 246–259 (EWERELLEGSKAEE) shows a compositional bias: basic and acidic residues. Residues 260 to 285 (AAAAAPAENAEAPAAPAAEAPAAAEA) show a composition bias toward low complexity.

The protein belongs to the universal ribosomal protein uS2 family.

This Pseudarthrobacter chlorophenolicus (strain ATCC 700700 / DSM 12829 / CIP 107037 / JCM 12360 / KCTC 9906 / NCIMB 13794 / A6) (Arthrobacter chlorophenolicus) protein is Small ribosomal subunit protein uS2.